We begin with the raw amino-acid sequence, 428 residues long: Dihydroorotase (428 aa).

The Zn(2+) site is built by His59 and His61. Substrate-binding positions include 61–63 (HLR) and Asn93. Zn(2+) contacts are provided by Asp151, His178, and His231. Substrate is bound at residue Asn277. Asp304 provides a ligand contact to Zn(2+). Asp304 is an active-site residue. Residues His308 and 322–323 (FG) contribute to the substrate site.

The protein belongs to the metallo-dependent hydrolases superfamily. DHOase family. Class I DHOase subfamily. Zn(2+) is required as a cofactor.

It carries out the reaction (S)-dihydroorotate + H2O = N-carbamoyl-L-aspartate + H(+). Its pathway is pyrimidine metabolism; UMP biosynthesis via de novo pathway; (S)-dihydroorotate from bicarbonate: step 3/3. Catalyzes the reversible cyclization of carbamoyl aspartate to dihydroorotate. This chain is Dihydroorotase, found in Bacillus cereus (strain ZK / E33L).